The primary structure comprises 513 residues: Pleiotropic regulator 1 (513 aa).

Position 1 is an N-acetylmethionine (Met-1). Residues Thr-60 to His-79 form a disordered region. Ser-119 is subject to Phosphoserine. The interval Val-136–Thr-160 is disordered. At Ser-200 the chain carries Phosphoserine. WD repeat units follow at residues Gly-201–Ser-240, Gly-243–His-282, Gly-285–Thr-324, Gly-327–Thr-366, Asn-369–Ser-409, Gly-410–Arg-448, and Asp-459–Thr-498. Ser-390 is modified (phosphoserine).

This sequence belongs to the WD repeat PRL1/PRL2 family. In terms of assembly, identified in the spliceosome C complex. Component of the PRP19-CDC5L splicing complex composed of a core complex comprising a homotetramer of PRPF19, CDC5L, PLRG1 and BCAS2, and at least three less stably associated proteins CTNNBL1, CWC15 and HSPA8. Interacts (via its WD40 repeat domain) directly with CDC5L (via its C-terminal); the interaction is required for mRNA splicing but not for spliceosome assembly. Component of the minor spliceosome, which splices U12-type introns. Within this complex, interacts with CRIPT. Also interacts directly in the complex with BCAS2 and PRPF19. Interacts with USB1.

It is found in the nucleus. The protein resides in the nucleus speckle. Functionally, involved in pre-mRNA splicing as component of the spliceosome. Component of the PRP19-CDC5L complex that forms an integral part of the spliceosome and is required for activating pre-mRNA splicing. As a component of the minor spliceosome, involved in the splicing of U12-type introns in pre-mRNAs. The protein is Pleiotropic regulator 1 (Plrg1) of Mus musculus (Mouse).